We begin with the raw amino-acid sequence, 288 residues long: Probable coatomer subunit epsilon (288 aa).

Ser262 is modified (phosphoserine).

This sequence belongs to the COPE family. Oligomeric complex that consists of at least the alpha, beta, beta', gamma, delta, epsilon and zeta subunits.

Its subcellular location is the cytoplasm. The protein resides in the golgi apparatus membrane. It localises to the cytoplasmic vesicle. It is found in the COPI-coated vesicle membrane. Functionally, the coatomer is a cytosolic protein complex that binds to dilysine motifs and reversibly associates with Golgi non-clathrin-coated vesicles, which further mediate biosynthetic protein transport from the ER, via the Golgi up to the trans Golgi network. The coatomer complex is required for budding from Golgi membranes, and is essential for the retrograde Golgi-to-ER transport of dilysine-tagged proteins. This is Probable coatomer subunit epsilon (sec28) from Schizosaccharomyces pombe (strain 972 / ATCC 24843) (Fission yeast).